Here is a 668-residue protein sequence, read N- to C-terminus: Fructose-1,6-bisphosphatase class 3 (668 aa).

Belongs to the FBPase class 3 family. Requires Mn(2+) as cofactor.

It carries out the reaction beta-D-fructose 1,6-bisphosphate + H2O = beta-D-fructose 6-phosphate + phosphate. It functions in the pathway carbohydrate biosynthesis; gluconeogenesis. The polypeptide is Fructose-1,6-bisphosphatase class 3 (Clostridium botulinum (strain Langeland / NCTC 10281 / Type F)).